The chain runs to 234 residues: Large ribosomal subunit protein uL1 (234 aa).

This sequence belongs to the universal ribosomal protein uL1 family. As to quaternary structure, part of the 50S ribosomal subunit.

Functionally, binds directly to 23S rRNA. The L1 stalk is quite mobile in the ribosome, and is involved in E site tRNA release. In terms of biological role, protein L1 is also a translational repressor protein, it controls the translation of the L11 operon by binding to its mRNA. The chain is Large ribosomal subunit protein uL1 from Tolumonas auensis (strain DSM 9187 / NBRC 110442 / TA 4).